The primary structure comprises 242 residues: Probable transcriptional regulatory protein XAC3151 (242 aa).

The protein belongs to the TACO1 family.

Its subcellular location is the cytoplasm. The protein is Probable transcriptional regulatory protein XAC3151 of Xanthomonas axonopodis pv. citri (strain 306).